The following is a 641-amino-acid chain: Fructose-1,6-bisphosphatase class 3 (641 aa).

Belongs to the FBPase class 3 family. Requires Mn(2+) as cofactor.

The enzyme catalyses beta-D-fructose 1,6-bisphosphate + H2O = beta-D-fructose 6-phosphate + phosphate. It functions in the pathway carbohydrate biosynthesis; gluconeogenesis. This Latilactobacillus sakei subsp. sakei (strain 23K) (Lactobacillus sakei subsp. sakei) protein is Fructose-1,6-bisphosphatase class 3.